Reading from the N-terminus, the 569-residue chain is Dihydroxy-acid dehydratase (569 aa).

Residue Asp80 coordinates Mg(2+). Cys121 serves as a coordination point for [2Fe-2S] cluster. Residues Asp122 and Lys123 each contribute to the Mg(2+) site. Lys123 is modified (N6-carboxylysine). Cys194 lines the [2Fe-2S] cluster pocket. A Mg(2+)-binding site is contributed by Glu446. Catalysis depends on Ser472, which acts as the Proton acceptor.

The protein belongs to the IlvD/Edd family. As to quaternary structure, homodimer. [2Fe-2S] cluster is required as a cofactor. Requires Mg(2+) as cofactor.

The catalysed reaction is (2R)-2,3-dihydroxy-3-methylbutanoate = 3-methyl-2-oxobutanoate + H2O. It catalyses the reaction (2R,3R)-2,3-dihydroxy-3-methylpentanoate = (S)-3-methyl-2-oxopentanoate + H2O. Its pathway is amino-acid biosynthesis; L-isoleucine biosynthesis; L-isoleucine from 2-oxobutanoate: step 3/4. It participates in amino-acid biosynthesis; L-valine biosynthesis; L-valine from pyruvate: step 3/4. Functions in the biosynthesis of branched-chain amino acids. Catalyzes the dehydration of (2R,3R)-2,3-dihydroxy-3-methylpentanoate (2,3-dihydroxy-3-methylvalerate) into 2-oxo-3-methylpentanoate (2-oxo-3-methylvalerate) and of (2R)-2,3-dihydroxy-3-methylbutanoate (2,3-dihydroxyisovalerate) into 2-oxo-3-methylbutanoate (2-oxoisovalerate), the penultimate precursor to L-isoleucine and L-valine, respectively. The sequence is that of Dihydroxy-acid dehydratase from Desulforudis audaxviator (strain MP104C).